The sequence spans 111 residues: Cell division topological specificity factor (111 aa).

Belongs to the MinE family.

Prevents the cell division inhibition by proteins MinC and MinD at internal division sites while permitting inhibition at polar sites. This ensures cell division at the proper site by restricting the formation of a division septum at the midpoint of the long axis of the cell. The sequence is that of Cell division topological specificity factor from Prochlorococcus marinus (strain MIT 9312).